Reading from the N-terminus, the 736-residue chain is Melanotransferrin (736 aa).

The N-terminal stretch at 1-19 (MRCRSAAMWIFLALRTALG) is a signal peptide. Transferrin-like domains lie at 23–357 (VRWC…GLLC) and 366–706 (LRWC…GMQS). 2 disulfide bridges follow: cysteine 26–cysteine 63 and cysteine 36–cysteine 54. Fe(3+) is bound by residues aspartate 78 and tyrosine 107. N-linked (GlcNAc...) asparagine glycosylation occurs at asparagine 118. 4 disulfides stabilise this stretch: cysteine 130–cysteine 216, cysteine 172–cysteine 189, cysteine 186–cysteine 199, and cysteine 257–cysteine 271. Threonine 132 contributes to the hydrogencarbonate binding site. An N-linked (GlcNAc...) asparagine glycan is attached at asparagine 135. Positions 136, 138, and 139 each coordinate hydrogencarbonate. Tyrosine 210 is a Fe(3+) binding site. Fe(3+)-binding residues include histidine 279 and tyrosine 451. The N-linked (GlcNAc...) asparagine glycan is linked to asparagine 515. Histidine 625 provides a ligand contact to Fe(3+). Glycine 711 carries the GPI-anchor amidated glycine lipid modification. Positions 712–736 (AAVGAPGASLLPLLPLAVGLLLSSL) are cleaved as a propeptide — removed in mature form.

Belongs to the transferrin family.

The protein localises to the cell membrane. Involved in iron cellular uptake. Seems to be internalized and then recycled back to the cell membrane. Binds a single atom of iron per subunit. Could also bind zinc. In Oryctolagus cuniculus (Rabbit), this protein is Melanotransferrin.